Here is a 734-residue protein sequence, read N- to C-terminus: ATP-dependent RNA helicase SUV3L, mitochondrial (734 aa).

The transit peptide at 1–60 (MAAAAAIAAALLRRSTSSQHHRRILLLPLLSHLQRAAPRSPSPWDPPPHHRFFFSSDVTA) directs the protein to the mitochondrion. A disordered region spans residues 58–88 (VTAEGDSKPRPPLDGKQLWREVSTSEPATGA). A compositionally biased stretch (basic and acidic residues) spans 62 to 76 (GDSKPRPPLDGKQLW). One can recognise a Helicase ATP-binding domain in the interval 198–356 (FARAMRRRVV…RFKPLVVEAK (159 aa)). Residue 211 to 218 (GPTNSGKT) coordinates ATP. Residues 357-525 (TLLGDLKNVR…SFAIQFPDLT (169 aa)) form the Helicase C-terminal domain. 2 N-linked (GlcNAc...) asparagine glycosylation sites follow: Asn-594 and Asn-614. Positions 667 to 734 (ASWKPTSRQQ…QDPSSLNFVA (68 aa)) are disordered. The segment covering 684–693 (EEDNDVEQAS) has biased composition (acidic residues). The span at 695–709 (DNAKNDSEDGYERSI) shows a compositional bias: basic and acidic residues. N-linked (GlcNAc...) asparagine glycosylation is present at Asn-699. Over residues 725-734 (QDPSSLNFVA) the composition is skewed to polar residues.

It belongs to the helicase family. Homodimer; in free form. Component of the mitochondrial degradosome (mtEXO) complex which is a heteropentamer containing 2 copies of SUPV3L1 and 3 copies of PNPT1. Mg(2+) serves as cofactor. It depends on Mn(2+) as a cofactor.

Its subcellular location is the nucleus. It is found in the mitochondrion matrix. It localises to the mitochondrion nucleoid. The catalysed reaction is ATP + H2O = ADP + phosphate + H(+). Its function is as follows. Major helicase player in mitochondrial RNA metabolism. Component of the mitochondrial degradosome (mtEXO) complex, that degrades 3' overhang double-stranded RNA with a 3'-to-5' directionality in an ATP-dependent manner. ATPase and ATP-dependent multisubstrate helicase, able to unwind double-stranded (ds) DNA and RNA, and RNA/DNA heteroduplexes in the 5'-to-3' direction. Plays a role in the RNA surveillance system in mitochondria; regulates the stability of mature mRNAs, the removal of aberrantly formed mRNAs and the rapid degradation of non coding processing intermediates. Confers salinity and drought stress tolerances by maintaining both photosynthesis and antioxidant machinery, probably via an increase in plant hormones levels such as gibberellic acid (GA(3)), the cytokinin zeatin (Z) and indole-3-acetic acid (IAA). This Oryza sativa subsp. japonica (Rice) protein is ATP-dependent RNA helicase SUV3L, mitochondrial.